A 429-amino-acid chain; its full sequence is Enolase (429 aa).

Position 163 (Q163) interacts with (2R)-2-phosphoglycerate. The Proton donor role is filled by E205. Positions 242, 287, and 314 each coordinate Mg(2+). (2R)-2-phosphoglycerate contacts are provided by K339, R368, S369, and K390. K339 acts as the Proton acceptor in catalysis.

This sequence belongs to the enolase family. As to quaternary structure, homooctamer. Mg(2+) is required as a cofactor.

It localises to the cytoplasm. Its subcellular location is the secreted. The protein localises to the cell surface. The catalysed reaction is (2R)-2-phosphoglycerate = phosphoenolpyruvate + H2O. Its pathway is carbohydrate degradation; glycolysis; pyruvate from D-glyceraldehyde 3-phosphate: step 4/5. Functionally, catalyzes the reversible conversion of 2-phosphoglycerate (2-PG) into phosphoenolpyruvate (PEP). It is essential for the degradation of carbohydrates via glycolysis. This Zymomonas mobilis subsp. mobilis (strain ATCC 31821 / ZM4 / CP4) protein is Enolase.